Here is a 103-residue protein sequence, read N- to C-terminus: UPF0473 protein LCA_0390 (103 aa).

Belongs to the UPF0473 family.

This chain is UPF0473 protein LCA_0390, found in Latilactobacillus sakei subsp. sakei (strain 23K) (Lactobacillus sakei subsp. sakei).